The following is a 279-amino-acid chain: Small ribosomal subunit protein uS9m (279 aa).

It belongs to the universal ribosomal protein uS9 family.

The protein localises to the mitochondrion. The polypeptide is Small ribosomal subunit protein uS9m (MRPS9) (Eremothecium gossypii (strain ATCC 10895 / CBS 109.51 / FGSC 9923 / NRRL Y-1056) (Yeast)).